The chain runs to 325 residues: Elongation factor P--(R)-beta-lysine ligase (325 aa).

Position 76 to 78 (76 to 78 (SPE)) interacts with substrate. ATP is bound by residues 100–102 (RNE) and N109. Y118 serves as a coordination point for substrate. 244-245 (EL) contacts ATP. E251 serves as a coordination point for substrate. ATP is bound at residue G300.

Belongs to the class-II aminoacyl-tRNA synthetase family. EpmA subfamily. As to quaternary structure, homodimer.

It catalyses the reaction D-beta-lysine + L-lysyl-[protein] + ATP = N(6)-((3R)-3,6-diaminohexanoyl)-L-lysyl-[protein] + AMP + diphosphate + H(+). In terms of biological role, with EpmB is involved in the beta-lysylation step of the post-translational modification of translation elongation factor P (EF-P). Catalyzes the ATP-dependent activation of (R)-beta-lysine produced by EpmB, forming a lysyl-adenylate, from which the beta-lysyl moiety is then transferred to the epsilon-amino group of a conserved specific lysine residue in EF-P. The sequence is that of Elongation factor P--(R)-beta-lysine ligase from Citrobacter koseri (strain ATCC BAA-895 / CDC 4225-83 / SGSC4696).